Consider the following 129-residue polypeptide: Histone H2A.J (129 aa).

The interval 1 to 22 (MSGRGKQGGKVRAKAKSRSSRA) is disordered. Ser-2 bears the N-acetylserine mark. Ser-2 is subject to Phosphoserine. Lys-6 is subject to N6-acetyllysine. A compositionally biased stretch (basic residues) spans 7–19 (QGGKVRAKAKSRS). N6-lactoyllysine; alternate is present on Lys-10. Glycyl lysine isopeptide (Lys-Gly) (interchain with G-Cter in ubiquitin) cross-links involve residues Lys-14 and Lys-16. Gln-105 is subject to N5-methylglutamine. Residue Lys-120 forms a Glycyl lysine isopeptide (Lys-Gly) (interchain with G-Cter in ubiquitin) linkage.

The protein belongs to the histone H2A family. As to quaternary structure, the nucleosome is a histone octamer containing two molecules each of H2A, H2B, H3 and H4 assembled in one H3-H4 heterotetramer and two H2A-H2B heterodimers. The octamer wraps approximately 147 bp of DNA. Monoubiquitination of Lys-120 (H2AXK119ub) gives a specific tag for epigenetic transcriptional repression. Following DNA double-strand breaks (DSBs), it is ubiquitinated through 'Lys-63' linkage of ubiquitin moieties. Post-translationally, phosphorylation on Ser-2 is enhanced during mitosis. Phosphorylation on Ser-2 directly represses transcription.

It is found in the nucleus. Its subcellular location is the chromosome. Functionally, core component of nucleosome. Nucleosomes wrap and compact DNA into chromatin, limiting DNA accessibility to the cellular machineries which require DNA as a template. Histones thereby play a central role in transcription regulation, DNA repair, DNA replication and chromosomal stability. DNA accessibility is regulated via a complex set of post-translational modifications of histones, also called histone code, and nucleosome remodeling. In Gallus gallus (Chicken), this protein is Histone H2A.J (H2A-IX).